The following is a 219-amino-acid chain: Large ribosomal subunit protein uL29m (219 aa).

The segment at 77–97 is disordered; sequence ASKYPLPKPVSPEKLEKREST. Residues 87–97 are compositionally biased toward basic and acidic residues; that stretch reads SPEKLEKREST.

Belongs to the universal ribosomal protein uL29 family. As to quaternary structure, component of the mitochondrial large ribosomal subunit. Mature mitochondrial ribosomes consist of a small (37S) and a large (54S) subunit. The 37S subunit contains at least 33 different proteins and 1 molecule of RNA (15S). The 54S subunit contains at least 45 different proteins and 1 molecule of RNA (21S).

The protein localises to the mitochondrion. The sequence is that of Large ribosomal subunit protein uL29m (mrpl4) from Emericella nidulans (strain FGSC A4 / ATCC 38163 / CBS 112.46 / NRRL 194 / M139) (Aspergillus nidulans).